A 382-amino-acid chain; its full sequence is Methylthioribose-1-phosphate isomerase (382 aa).

Residue aspartate 261 is the Proton donor of the active site.

This sequence belongs to the eIF-2B alpha/beta/delta subunits family. MtnA subfamily.

Its subcellular location is the cytoplasm. It localises to the nucleus. The catalysed reaction is 5-(methylsulfanyl)-alpha-D-ribose 1-phosphate = 5-(methylsulfanyl)-D-ribulose 1-phosphate. The protein operates within amino-acid biosynthesis; L-methionine biosynthesis via salvage pathway; L-methionine from S-methyl-5-thio-alpha-D-ribose 1-phosphate: step 1/6. Functionally, catalyzes the interconversion of methylthioribose-1-phosphate (MTR-1-P) into methylthioribulose-1-phosphate (MTRu-1-P). This is Methylthioribose-1-phosphate isomerase from Ricinus communis (Castor bean).